Consider the following 322-residue polypeptide: Homeobox protein DBX1-B (322 aa).

The segment at residues 179 to 238 (GMLRRAVFSDVQRKALEKMFQKQKYISKPDRKKLATKLGLKDSQVKIWFQNRRMKWRNSK) is a DNA-binding region (homeobox). 2 disordered regions span residues 238–266 (KERE…LSDV) and 296–322 (DLHF…ITVS). Positions 312–322 (SESEDEEITVS) are enriched in acidic residues.

This sequence belongs to the H2.0 homeobox family.

The protein localises to the nucleus. The protein is Homeobox protein DBX1-B (dbx1b) of Danio rerio (Zebrafish).